We begin with the raw amino-acid sequence, 149 residues long: D-aminoacyl-tRNA deacylase (149 aa).

Positions 137-138 (GP) match the Gly-cisPro motif, important for rejection of L-amino acids motif.

The protein belongs to the DTD family. As to quaternary structure, homodimer.

It is found in the cytoplasm. The enzyme catalyses glycyl-tRNA(Ala) + H2O = tRNA(Ala) + glycine + H(+). It carries out the reaction a D-aminoacyl-tRNA + H2O = a tRNA + a D-alpha-amino acid + H(+). Its function is as follows. An aminoacyl-tRNA editing enzyme that deacylates mischarged D-aminoacyl-tRNAs. Also deacylates mischarged glycyl-tRNA(Ala), protecting cells against glycine mischarging by AlaRS. Acts via tRNA-based rather than protein-based catalysis; rejects L-amino acids rather than detecting D-amino acids in the active site. By recycling D-aminoacyl-tRNA to D-amino acids and free tRNA molecules, this enzyme counteracts the toxicity associated with the formation of D-aminoacyl-tRNA entities in vivo and helps enforce protein L-homochirality. The protein is D-aminoacyl-tRNA deacylase of Thermosipho africanus (strain TCF52B).